The sequence spans 213 residues: Small ribosomal subunit protein eS1 (213 aa).

It belongs to the eukaryotic ribosomal protein eS1 family.

The protein is Small ribosomal subunit protein eS1 of Desulfurococcus amylolyticus (strain DSM 18924 / JCM 16383 / VKM B-2413 / 1221n) (Desulfurococcus kamchatkensis).